The following is a 220-amino-acid chain: Metalloproteinase inhibitor 2 (220 aa).

The signal sequence occupies residues 1–26; it reads MGAAARTLRLALGLLLLATLLRPADA. Residue Cys27 coordinates Zn(2+). 2 involved in metalloproteinase-binding regions span residues 27 to 30 and 95 to 96; these read CSCS and SA. 6 cysteine pairs are disulfide-bonded: Cys27/Cys98, Cys29/Cys127, Cys39/Cys152, Cys154/Cys201, Cys159/Cys164, and Cys172/Cys193. Residues 27 to 152 form the NTR domain; sequence CSCSPVHPQQ…SLNHRYQMGC (126 aa).

This sequence belongs to the protease inhibitor I35 (TIMP) family. As to quaternary structure, interacts (via the C-terminal) with MMP2 (via the C-terminal PEX domain); the interaction inhibits the MMP2 activity. In terms of processing, the activity of TIMP2 is dependent on the presence of disulfide bonds.

It localises to the secreted. In terms of biological role, complexes with metalloproteinases (such as collagenases) and irreversibly inactivates them by binding to their catalytic zinc cofactor. Known to act on MMP-1, MMP-2, MMP-3, MMP-7, MMP-8, MMP-9, MMP-10, MMP-13, MMP-14, MMP-15, MMP-16 and MMP-19. The sequence is that of Metalloproteinase inhibitor 2 (TIMP2) from Homo sapiens (Human).